Consider the following 221-residue polypeptide: MAKMDHDYRLNIVLVGDNQCGKSFLLSRYCDGMFVENGIQLWHGIEIKNKIIELKNQSTNEIVKVKLMIFDGNGGCKFKELFYENYLKHQHGFIIMYDVTNLESFNNLSNWISKIKNSYQTSNLYPSPEPILFIVGNKCDLIDDSKITTIVDLKKPQEFCDSLSIPSIHNVSVKENINVDLIFQKLSQLIMDTYPPPKISEIKKIKNVDSGGDSINNCIIN.

16–23 (GDNQCGKS) is a binding site for GTP. Residues 38-47 (GIQLWHGIEI) carry the Effector region motif. GTP-binding positions include 71–75 (DGNGG) and 137–140 (NKCD). The residue at position 218 (C218) is a Cysteine methyl ester. C218 is lipidated: S-geranylgeranyl cysteine. Positions 219–221 (IIN) are cleaved as a propeptide — removed in mature form.

This sequence belongs to the small GTPase superfamily. Rab family.

The protein resides in the cell membrane. The chain is Ras-related protein RabS (rabS) from Dictyostelium discoideum (Social amoeba).